The following is a 93-amino-acid chain: Chromosomal protein MC1 (93 aa).

The tract at residues 1 to 43 is disordered; that stretch reads SNTRNFVLRDEEGNEHGVFTGKQPRQAALKAANRGDGTKSNPD.

Protects DNA against thermal denaturation and modulates transcription. The sequence is that of Chromosomal protein MC1 from Methanosarcina barkeri.